We begin with the raw amino-acid sequence, 129 residues long: uncharacterized protein (129 aa).

A helical membrane pass occupies residues 46–66; sequence FFHFFFSFLLHLISPAVTGGI.

It localises to the membrane. This is an uncharacterized protein from Saccharomyces cerevisiae (strain ATCC 204508 / S288c) (Baker's yeast).